The primary structure comprises 297 residues: Phosphoribosylaminoimidazole-succinocarboxamide synthase (297 aa).

Belongs to the SAICAR synthetase family.

The enzyme catalyses 5-amino-1-(5-phospho-D-ribosyl)imidazole-4-carboxylate + L-aspartate + ATP = (2S)-2-[5-amino-1-(5-phospho-beta-D-ribosyl)imidazole-4-carboxamido]succinate + ADP + phosphate + 2 H(+). Its pathway is purine metabolism; IMP biosynthesis via de novo pathway; 5-amino-1-(5-phospho-D-ribosyl)imidazole-4-carboxamide from 5-amino-1-(5-phospho-D-ribosyl)imidazole-4-carboxylate: step 1/2. The sequence is that of Phosphoribosylaminoimidazole-succinocarboxamide synthase from Mycobacterium marinum (strain ATCC BAA-535 / M).